A 1607-amino-acid chain; its full sequence is MNAEMREGSSALPQLQAHSPVADNIDLMDIDEPASNGSFEESPATPFDDDAFVNAGDTDQEDDDPDTKKWIVNDSRKPRKISEKKRADHAAFDVWIEENQQDLSKGLDKFIVDDDGKTFQSLIRDFENKRIITSPRDYQLELFERAKTQNTIAVLDTGSGKTLIAALLLRWTIQNELEDRSKRLPKRIAFFLVDKVALVFQQHAVLACNLDYPLEKFCGDMVEDVTQDFWHKTFDENMAIVCTAEILYQCLTHSYIRMDQVNLLVFDEAHHTKKNHPYARIIKDFYAEVKDLNKRLRISRAMTASPVDAQIDPKIARSPELEGLLHSQIATVADPTALHNSSTKLKREVTVEYGKCLPEFETGLNRALKDLVGEHRLFQKPFAFTATAASELGPWCADRYWQLFFRGEEVVKLEAKTEREILRKSAYSQEIAAQVNKVREAHRLVGQHEFASPSSDLLSSKVVILLRILRGEFRGVDHKRRCIVFVRQRNVASLLTDLLQQPEMRIPGLEPGILVGGGRPEASYDNAKVTYRDQVLTIIKFKKGELNCIFATSVAEEGLDIPDCNVIIRYDLNNTLIQYIQSRGRARQEGSIYIHMVESENEEHVKKVCQNQESEDALRKFCEALPADRKLTGNNFDMEYFLRKEKDQRQYTVPETGARLNYKQSLICLAAFVASLPHPPEVNLTAGYLVLSVPGGYQCEVTLPESSPIRSATGKVYASKAVAKCSAAYEMCLMLIKGKYLDQHLRPTFTKQLPAMRNARLAVSSKKKEQYKMRIKPELWSVLGEPTELFAMALTLADPTALARHSSPLLLLTRQPIPQIASFPLYFGKNRSSAVHCVPVPGRVELDDNQIQGLVAVTLAIFKDIFSKEYEATAAQLPYFLAPTLMQHGSDFTSVTDLSRIVDWGAVTFVRDNERVAYALDDEADEFFKNKYVADPYDGSRKFFLRGRRHDMKPTDMVPEGIVTPGHRAWRVSCKTHDILNYSLSAWSKSRAFLTPREDQPVVEAEVLPIRRNLLDDHIGDDDLEPKPCFIVLEPLRISPLPVDLVAMAYNFPAIMHRIDSNLVALEACKMLNLNVRPDLALEAFTKDSDNSGEHDAEQISFQSGMGNNYERLEFLGDCFLKMATTISIFTLIPDKAEFEYHVERMLLICNRNLFNNALEVKLEEHIRSMAFDRRSWYPEGLTLKKGKRKDLTRQHVLADKTIADVCEALIGAAYLTAQEQTPPNFDLAIRAVTVMVKDKNHTMTSYSDYYAAYSPPAWQTAPCNSTQLDMAARFEARMGYAFTHPRLLRSAFQHPTYPSVYEKLPSYQRLEFLGDALLDMASVEFLFHRFPGADPQWLTEHKMAMVSNQFLGCLAVYLGFHRAISYCASAIQKEITEYVTEIEDALQSARDDASKTPCNRHATTPSPGDLPAESFARDFWVRCSRPPKCLPDVVEAYVGAVFVDSRYDFARVRAFFADHVRPFFEDMRLYDAFANKHPVTFLAGIMQGRMRCAEWRLLVKDLPPVVGAGAGTELETPQVVCAVRVHGLTLAHAVAASGRYGKIAAAKKAIQVLEGMDAEAFRKAYGCACVLGEEEQQAAQTIATELEVFPAFSASGLEVAHHGSAV.

A disordered region spans residues 1 to 74; sequence MNAEMREGSS…PDTKKWIVND (74 aa). Residues 142–324 form the Helicase ATP-binding domain; that stretch reads LFERAKTQNT…IARSPELEGL (183 aa). ATP is bound at residue 155 to 162; it reads LDTGSGKT. Positions 267–270 match the DEAH box motif; that stretch reads DEAH. A Helicase C-terminal domain is found at 461 to 632; it reads KVVILLRILR…EALPADRKLT (172 aa). One can recognise a Dicer dsRNA-binding fold domain in the interval 665 to 755; the sequence is SLICLAAFVA…RPTFTKQLPA (91 aa). One can recognise a PAZ domain in the interval 905-1040; that stretch reads GAVTFVRDNE…IVLEPLRISP (136 aa). RNase III domains lie at 1063–1219 and 1272–1447; these read LVAL…LTAQ and AARF…VDSR. Residues Glu1312, Asp1433, and Glu1436 each contribute to the Mg(2+) site. The 79-residue stretch at 1478–1556 folds into the DRBM domain; the sequence is HPVTFLAGIM…AKKAIQVLEG (79 aa). The Zn(2+) site is built by Cys1493, His1527, Cys1568, and Cys1570.

It belongs to the helicase family. Dicer subfamily. Requires Mg(2+) as cofactor. Mn(2+) is required as a cofactor.

Functionally, dicer-like endonuclease involved in cleaving double-stranded RNA in the RNA interference (RNAi) pathway. Produces 21 to 25 bp dsRNAs (siRNAs) which target the selective destruction of homologous RNAs leading to sequence-specific suppression of gene expression, called post-transcriptional gene silencing (PTGS). Part of a broad host defense response against viral infection and transposons. The sequence is that of Dicer-like protein 1 (DCL1) from Chaetomium globosum (strain ATCC 6205 / CBS 148.51 / DSM 1962 / NBRC 6347 / NRRL 1970) (Soil fungus).